Here is a 509-residue protein sequence, read N- to C-terminus: 5-hydroxytryptamine receptor (509 aa).

Topologically, residues 1–99 (MANFTFGDLA…YSHEHLVLTS (99 aa)) are extracellular. 6 N-linked (GlcNAc...) asparagine glycosylation sites follow: N3, N47, N58, N68, N72, and N78. The helical transmembrane segment at 100-122 (VILGLFVLCCIIGNCFVIAAVML) threads the bilayer. At 123–132 (ERSLHNVANY) the chain is on the cytoplasmic side. A helical transmembrane segment spans residues 133–154 (LILSLAVADLMVAVLVMPLSVV). The Extracellular segment spans residues 155–169 (SEISKVWFLHSEVCD). A disulfide bond links C168 and C246. The chain crosses the membrane as a helical span at residues 170–191 (MWISVDVLCCTASILHLVAIAM). The Cytoplasmic segment spans residues 192–210 (DRYWAVTSIDYIRRRSARR). Residues 211–233 (ILLMIMVVWIVALFISIPPLFGW) traverse the membrane as a helical segment. The Extracellular portion of the chain corresponds to 234-259 (RDPNNDPDKTGTCIISQDKGYTIFST). Residues 260–281 (VGAFYLPMLVMMIIYIRIWLVA) traverse the membrane as a helical segment. At 282-432 (RSRIRKDKFQ…LKRERKAART (151 aa)) the chain is on the cytoplasmic side. The interval 323–372 (SPDSTTEKKKRRAPFKSYGCSPRPERKKNRAKKLPENANGVNSNSSSSER) is disordered. Residues 433–456 (LAIITGAFLICWLPFFIIALIGPF) traverse the membrane as a helical segment. Over 457–465 (VDPEGIPPF) the chain is Extracellular. Residues 466–488 (ARSFVLWLGYFNSLLNPIIYTIF) traverse the membrane as a helical segment. The Cytoplasmic segment spans residues 489–509 (SPEFRSAFQKILFGKYRRGHR).

This sequence belongs to the G-protein coupled receptor 1 family.

The protein resides in the cell membrane. Its function is as follows. This is a receptor for 5-hydroxytryptamine (serotonin), a biogenic hormone that function as a neurotransmitter, a hormone, and a mitogen. The protein is 5-hydroxytryptamine receptor of Lymnaea stagnalis (Great pond snail).